The primary structure comprises 999 residues: Cytoplasmic dynein 2 intermediate chain 1 (999 aa).

4 stretches are compositionally biased toward basic and acidic residues: residues 1–19 (MEPGKRRTKDDTWKADDLR), 29–138 (PKEE…EEIR), 146–260 (LLSR…EDRH), and 268–300 (GLHYDDERRRSHADKKERSSKEEHKKRELKELE). The segment at 1–350 (MEPGKRRTKD…EHEAREKAEE (350 aa)) is disordered. The residue at position 250 (Ser250) is a Phosphoserine. Residues 318–338 (LEDDFVDYEDDFEVCDGDDDS) are compositionally biased toward acidic residues. A compositionally biased stretch (basic and acidic residues) spans 339-350 (NNEHEAREKAEE). The binding to the DYNLT2B-DYNLT1/DYNLT3 dimer stretch occupies residues 416 to 495 (ASHRQKSRSQ…DIQTEDIETR (80 aa)). WD repeat units follow at residues 637–677 (ICES…RIHH), 718–764 (AYKK…KADI), 850–890 (VRPI…PIMQ), and 895–935 (TSGH…LGPV).

This sequence belongs to the dynein light intermediate chain family. As to quaternary structure, intermediate chain of the cytoplasmic dynein complex 2, a multisubunit complex, composed at least of eleven different proteins. The cytoplasmic dynein 2 complex consists of two catalytic heavy chains (HCs) and a number of non-catalytic subunits presented by intermediate chains (ICs), light intermediate chains (LICs) and light chains (LCs). Among them, a heavy chain (DYNC2H1), two intermediate chains (DYNC2I2 and DYNC2I1), a light intermediate chain (DYNC2LI1), and a light chain (DYNLT2B) are unique to the cytoplasmic dynein complex 2, but a subset of the light chains are also shared by dynein-1 and dynein-2 complexes. Interacts with DYNC2I2; their C-terminal domains each bind a copy of the heavy chain, and their extended N-terminal regions are held together by an array of light chain dimers. Interacts with DYNLT2B. Interacts (via the N-terminal half) with DYNLT2B-DYNLT1 dimer or with DYNLT2B-DYNLT3 dimer; this interaction is crucial for retrograde trafficking of ciliary proteins.

It is found in the cell projection. The protein localises to the cilium. Its subcellular location is the cytoplasm. It localises to the cytoskeleton. The protein resides in the microtubule organizing center. It is found in the centrosome. In terms of biological role, acts as one of several non-catalytic accessory components of the cytoplasmic dynein 2 complex (dynein-2 complex), a motor protein complex that drives the movement of cargos along microtubules within cilia and flagella in concert with the intraflagellar transport (IFT) system. DYNC2I1 plays a major role in retrograde ciliary protein trafficking in cilia and flagella. Also requires to maintain a functional transition zone. In Mus musculus (Mouse), this protein is Cytoplasmic dynein 2 intermediate chain 1 (Dync2i1).